Consider the following 86-residue polypeptide: Protein P17 (86 aa).

The segment at 63-86 (SPAEKPDNQPELTGITFEGDNNDQ) is disordered.

Homotetramer.

In terms of biological role, assembly protein that acts late in phage assembly, after capsid protein folding and multimerization, and sorting of membrane proteins has occurred. The major coat protein P3 and two assembly factors (P10 and P17) are needed during the assembly of the virus particle inside the host cell, when the capsid protein multimers are capable of enclosing the host-derived membrane, containing the virus-encoded membrane-associated proteins. This is Protein P17 (XVII) from Enterobacteria phage PRD1 (Bacteriophage PRD1).